We begin with the raw amino-acid sequence, 156 residues long: tRNA (cytidine(34)-2'-O)-methyltransferase (156 aa).

The S-adenosyl-L-methionine site is built by glycine 100, isoleucine 122, and serine 130.

The protein belongs to the class IV-like SAM-binding methyltransferase superfamily. RNA methyltransferase TrmH family. TrmL subfamily. In terms of assembly, homodimer.

It is found in the cytoplasm. The enzyme catalyses cytidine(34) in tRNA + S-adenosyl-L-methionine = 2'-O-methylcytidine(34) in tRNA + S-adenosyl-L-homocysteine + H(+). The catalysed reaction is 5-carboxymethylaminomethyluridine(34) in tRNA(Leu) + S-adenosyl-L-methionine = 5-carboxymethylaminomethyl-2'-O-methyluridine(34) in tRNA(Leu) + S-adenosyl-L-homocysteine + H(+). In terms of biological role, methylates the ribose at the nucleotide 34 wobble position in the two leucyl isoacceptors tRNA(Leu)(CmAA) and tRNA(Leu)(cmnm5UmAA). Catalyzes the methyl transfer from S-adenosyl-L-methionine to the 2'-OH of the wobble nucleotide. The sequence is that of tRNA (cytidine(34)-2'-O)-methyltransferase from Aeromonas hydrophila subsp. hydrophila (strain ATCC 7966 / DSM 30187 / BCRC 13018 / CCUG 14551 / JCM 1027 / KCTC 2358 / NCIMB 9240 / NCTC 8049).